The primary structure comprises 467 residues: Glutamate--tRNA ligase (467 aa).

The short motif at 9-19 (PSPTGYLHIGG) is the 'HIGH' region element. The short motif at 237-241 (KLSKR) is the 'KMSKS' region element. K240 contributes to the ATP binding site.

It belongs to the class-I aminoacyl-tRNA synthetase family. Glutamate--tRNA ligase type 1 subfamily. Monomer.

The protein resides in the cytoplasm. It catalyses the reaction tRNA(Glu) + L-glutamate + ATP = L-glutamyl-tRNA(Glu) + AMP + diphosphate. Functionally, catalyzes the attachment of glutamate to tRNA(Glu) in a two-step reaction: glutamate is first activated by ATP to form Glu-AMP and then transferred to the acceptor end of tRNA(Glu). The protein is Glutamate--tRNA ligase of Xylella fastidiosa (strain 9a5c).